We begin with the raw amino-acid sequence, 103 residues long: Large ribosomal subunit protein bL21 (103 aa).

A compositionally biased stretch (basic residues) spans 83-92 (YRRKKGHRQP). The disordered stretch occupies residues 83–103 (YRRKKGHRQPFSRVTVEKIEA).

It belongs to the bacterial ribosomal protein bL21 family. As to quaternary structure, part of the 50S ribosomal subunit. Contacts protein L20.

Its function is as follows. This protein binds to 23S rRNA in the presence of protein L20. The chain is Large ribosomal subunit protein bL21 from Pelotomaculum thermopropionicum (strain DSM 13744 / JCM 10971 / SI).